We begin with the raw amino-acid sequence, 355 residues long: Elongation factor Ts (355 aa).

The involved in Mg(2+) ion dislocation from EF-Tu stretch occupies residues 82–85 (TDFV).

This sequence belongs to the EF-Ts family.

It localises to the cytoplasm. Functionally, associates with the EF-Tu.GDP complex and induces the exchange of GDP to GTP. It remains bound to the aminoacyl-tRNA.EF-Tu.GTP complex up to the GTP hydrolysis stage on the ribosome. The polypeptide is Elongation factor Ts (Helicobacter pylori (strain G27)).